The primary structure comprises 173 residues: Mesencephalic astrocyte-derived neurotrophic factor homolog (173 aa).

The first 22 residues, 1–22 (MKTAHLVVVVCFLAGALQTAVA), serve as a signal peptide directing secretion. Disulfide bonds link Cys-28-Cys-114, Cys-31-Cys-103, Cys-61-Cys-72, and Cys-148-Cys-151.

Belongs to the ARMET family.

The protein localises to the secreted. Its function is as follows. Required during the maturation of the embryonic nervous system for maintenance of neuronal and cuticular connectivity. Essential for maintenance of dopaminergic neurons and dopamine levels. In Drosophila ananassae (Fruit fly), this protein is Mesencephalic astrocyte-derived neurotrophic factor homolog.